The primary structure comprises 441 residues: Interferon-related developmental regulator 2 (441 aa).

The span at 1 to 15 (MPRARKGNALRKGGQ) shows a compositional bias: basic residues. The segment at 1 to 51 (MPRARKGNALRKGGQRRGGGARSSTQADSGSSEDEAASEARSTTSDCPSLL) is disordered.

Belongs to the IFRD family. Associates with ribosomes; promoting ribosome inactivation.

Ribosome-binding protein that acts as an inhibitor of mRNA translation by promoting ribosome inactivation. Associates with the P- and E-sites of the ribosome and inserts a C-terminal helix into the mRNA exit channel to preclude translation. The chain is Interferon-related developmental regulator 2 from Mus musculus (Mouse).